The primary structure comprises 3140 residues: MSTIVFGSFTCHLDAAIHQDNADRLAKAWTRPENRQVSNVHLLCRRAAKSLINTYESATASAWKGLEEKLQPMFAKREFSKTVTKRKGLRCFKESSEKFIEKKLKKQYKEERERFQFLNGPDAIVNQISVDKCEASVWVPFPHIIEKPSFTTPSMKKKVVFTKVRMSEASLQLFMRRVAANAKANGQKVEIIGRKRVVGHYTTKSRLTYFRTHVRHLDGSKPRYDLVLDEATKKILQLFANTSGFHHVHKKGEITPGMSGFVVNPMNLSDPMHVYDTDLFIVRGKHNSILVDSRCKVSKEQSNEIVHYSDPGKQFWDGFTNSFMQCKLRETDHQCTSDLDVKECGYVAALVCQAIIPCGKITCLQCAQKYSYMSQQEIRDRFSTVIEQHEKTVMDNYPQFSHVLAFLKRYRELMRVENQNYEAFKDITHMIGERKEAPFSHLNKINELIIKGGMMSAQDYIEASDHLRELARYQKNRTENIRSGSIKAFRNKISSKAHVNMQLMCDNQLDTNGNFVWGQREYHAKRFFRNYFDVIDVSEGYRRHIVRENPRGIRKLAIGNLVMSTNLAALRKQLLGEECIHFEVSKECTSKRGENFVYQCCCVTHEDGTPLESEIISPTKNHLVVGNSGDSKYVDLPTAKGGAMFIAKAGYCYINIFLAMLININEDEAKSFTKTVRDTIVPKLGTWPSMMDLATACHFLAVLYPETRNAELPRILVDHEAKIFHVVDSFGSLSTGMHVLKANTINQLISFASDTLDSSMKTYLVGGLEVDKCDEFKNVKLLIRSIYKPQIMEQVLKEEPYLLLMSVLSPGVLMALFNSGSLEKATQYWIARSHSLAAITAMLSALAAKVSLASTLNAQMSVIDEHAAVLCDSVFVGTKPYASYMMAVKTLERMKARTESDHTLNDLGFSVLRQATPHLVEKSYLQELEQAWRELSWSERFSAILESQRWRKHIPKPFIPKDAADLGGRYDISVRSLLGSQYKRLKDVVRRKRDDVVCYTHQSMGKLFCKAIGISTSFLPSTLKMFDMLIIFGLLLSIGATCNSMINEHKHLKQVAADREDKKRFKRLQVLYTRLLEKIGCTPTADEFLEYVQGENPDLSKYAEDLIGDGQVVVHQSKRDSQANLERVAAFVALVMMLFDSERSDGVYKILNKLKGVMGSIDQTVHHQNLDDIEDMLDEKKLTVDFVLQSNEVAPTVPFDSTFEKWWTNQLETGNVIPHYRTEGHFLEFTRENAAHIANEVMHGSHQDILIRGAVGSGKSTGLPFHLSKKGHVLLIEPTRPLAENVCKQLRGQPFNVNPTLRMRGMSTFGSTPITVMTSGYALHFLANNPTYLDNYKCIIFDECHVHDASAMAFRCLLSEYSYPGKILKVSATPPGYEVDFKTQKEVKVIVEEALSFQQFVSNLGTGCNSDILKHGVNVLVYVASYNEVDTLSKLLTDRSFKVSKVDGRTMKVGNVEIPTSGTQAKPHFVVATNIIENGVTLDIDVVVDFGLKVVPILDIDNRLVRYTKKSISYGERIQRLGRVGRNKPGMALRIGFTEKGLTQIPPIIATEAAFLCFTYGLPVMTNGVSTSLLAMCTVKQARTMQQFELSPFYTVALVRFDGTMHQEIFRLLKSYRLRDSEVILNKLAIPNSNVCGWMSVRDYKRQGCNLDLDENIRVPFYVKDIPETLHDKVWQAVETHKSDAGFGRICSSSACKIAYTLQTDIHSIPRTVKIIDALLEQERTKQAHFRAMTSQSCSSSNFSLSSITSAIRSKYAKDHTEENIGVLQMAKSQLLEFKNLNIDPSYPELVRNFGALECVHHQTKEGVSKTLQLKGHWNKRLITRDATLMLGVLGGGAWMIFTYLKDSFQEEVVHQGFNRRQRQKLKFRQARDNRMAREVYGDDSTMEDYFGSAYSKKGKSKGKTRGMGTKTRKFVNMYGYDPTDYNFVRFVDPLTGHTLDENPLMDINLVQEHFSQIRNDYIGDDKITMQHIMSNPGIVAYYIKDATQKALKVDLTPHNPLRVCDKTATIAGFPEREFELRQTGHPTFVEPNAIPKINEVGQEEVDHESKSLFRGLRDYNPIASSICQLNNSSGTRHSEMFGLGFGGLIVTNQHLFKRNDGELTIRSHHGEFVVKDTKTLKLLPCKGRDILIIRLPKDFPPFPKRLQFRTPTTEDRVCLIGSNFQTKSISSTMSETSATYSVDNSHFWKHWISTKDGHCGLPIVSTRDGSILGLHSLANSTNTQNFYAAFPDNFETTYLSNQDNDNWIKQWRYNPDEVCWGSLELKRDIPQMPFTVCKLLTDLDREFVYNQSKTTHWLRDKLEGNLKAVGACPGQLVTKHVVKGKCTLFETYLLTHPEEHEFFRPLMGAYQKSALNKDEYVKDLMKYSKPIVVGAVDCEQFERALDVVISMLISKGFEECNYVTDPDDIFSALNMKAAVGALYSGKKRDYFKNASEQDKEDFIKASCKRLFMGKKGVWNGSLKAELRPKEKVEANKTRSFTAAPIDTLLGGKVCVDDFNNQFYSLNLHCPWSVGMTKFRGGWDKLLRALPDGWIYCDADGSQFDSSLSPYLINAVLNIRLAFMEEWDIGEQMLSNLYTEIVYTPIATPDGTIVKKFKGNNSGQPSTVVDNTLMVILAMTYSLLKLGYHPDTHECICRYFVNGDDLVLAVHPAYESMYDELQEHFSQLGLNYTFTTKTENKEELWFMSHRGVLFEDMYIPKLEPERIVSILEWDRSNEPIHRLEAICASMVEAWGYKELLREIRKFYSWVLEQAPYNALSKDGKAPYIAETALRKLYTDSEASETEIERYLEAFYNDVDDSLDSNIVIHQADEEEDDEEVDAGRPTVVTAPAATVATTQPAPVIQPAPQTTAPMFNPIFTPATTQPAVRPVPPISGAKPRSFGVYGNEDASPSTSNTLVNTGRDRDVDAGSIGTFAVPRLKTMTSKLSLPKVKGKAIMNLNHLAHYSPAQVDLSNTRAPQSCFQTWYEGVKRDYDVTDEEMSIILNGLMVWCIENGTSPNINGMWVMMDGETQVEYPIKPLLDHAKPTFRQIMAHFSNVAEAYIEKRNYEKAYMPRYGIQRNLTDYSLARYAFDFYEMTSTTPVRAREAHIQMKAAALRNVQNRLFGLDGNVGTQEEDTERHTAGDVNRNMHNLLGVRGV.

Residues 165–308 (RMSEASLQLF…KEQSNEIVHY (144 aa)) form the Peptidase S30 domain. Active-site for P1 proteinase activity residues include H216, D225, and S259. The short motif at 360-363 (KITC) is the Involved in interaction with stylet and aphid transmission element. Positions 618–620 (PTK) match the Involved in virions binding and aphid transmission motif. One can recognise a Peptidase C6 domain in the interval 644–766 (MFIAKAGYCY…DSSMKTYLVG (123 aa)). Active-site for helper component proteinase activity residues include C652 and H725. The Helicase ATP-binding domain occupies 1240-1392 (EVMHGSHQDI…TQKEVKVIVE (153 aa)). An ATP-binding site is contributed by 1253 to 1260 (GAVGSGKS). The DECH box signature appears at 1342 to 1345 (DECH). A Helicase C-terminal domain is found at 1411–1570 (DILKHGVNVL…GLPVMTNGVS (160 aa)). The short motif at 1897 to 1904 (KKGKSKGK) is the Nuclear localization signal element. Y1919 is subject to O-(5'-phospho-RNA)-tyrosine. Residues 2050-2268 (SKSLFRGLRD…VCWGSLELKR (219 aa)) form the Peptidase C4 domain. Catalysis depends on for nuclear inclusion protein A activity residues H2095, D2130, and C2200. One can recognise a RdRp catalytic domain in the interval 2534–2658 (WIYCDADGSQ…AVHPAYESMY (125 aa)). The segment at 2883–2905 (GVYGNEDASPSTSNTLVNTGRDR) is disordered. Residues 2890–2900 (ASPSTSNTLVN) are compositionally biased toward polar residues. A phosphoserine mark is found at S2891, S2911, and S2928. 2 positions are modified to phosphothreonine: T3064 and T3123.

It belongs to the potyviridae genome polyprotein family. As to quaternary structure, interacts with host eIF4E protein (via cap-binding region); this interaction mediates the translation of the VPg-viral RNA conjugates. Part of a complex that comprises VPg, RNA, host EIF4E and EIF4G; this interaction mediates the translation of the VPg-viral RNA conjugates. VPg is uridylylated by the polymerase and is covalently attached to the 5'-end of the genomic RNA. This uridylylated form acts as a nucleotide-peptide primer for the polymerase. Post-translationally, potyviral RNA is expressed as two polyproteins which undergo post-translational proteolytic processing. Genome polyprotein is processed by NIa-pro, P1 and HC-pro proteinases resulting in the production of at least ten individual proteins. P3N-PIPO polyprotein is cleaved by P1 and HC-pro proteinases resulting in the production of three individual proteins. The P1 proteinase and the HC-pro cleave only their respective C-termini autocatalytically. 6K1 is essential for proper proteolytic separation of P3 from CI.

It is found in the host cytoplasmic vesicle. The protein localises to the host nucleus. Its subcellular location is the virion. It catalyses the reaction RNA(n) + a ribonucleoside 5'-triphosphate = RNA(n+1) + diphosphate. The enzyme catalyses Hydrolyzes glutaminyl bonds, and activity is further restricted by preferences for the amino acids in P6 - P1' that vary with the species of potyvirus, e.g. Glu-Xaa-Xaa-Tyr-Xaa-Gln-|-(Ser or Gly) for the enzyme from tobacco etch virus. The natural substrate is the viral polyprotein, but other proteins and oligopeptides containing the appropriate consensus sequence are also cleaved.. The catalysed reaction is Hydrolyzes a Gly-|-Gly bond at its own C-terminus, commonly in the sequence -Tyr-Xaa-Val-Gly-|-Gly, in the processing of the potyviral polyprotein.. Required for aphid transmission and also has proteolytic activity. Only cleaves a Gly-Gly dipeptide at its own C-terminus. Interacts with virions and aphid stylets. Acts as a suppressor of RNA-mediated gene silencing, also known as post-transcriptional gene silencing (PTGS), a mechanism of plant viral defense that limits the accumulation of viral RNAs. May have RNA-binding activity. Functionally, has helicase activity. It may be involved in replication. In terms of biological role, indispensable for virus replication. Reduces the abundance of host transcripts related to jasmonic acid biosynthesis therefore altering the host defenses. In order to increase its own stability, decreases host protein degradation pathways. Its function is as follows. Indispensable for virus replication. Mediates the cap-independent, EIF4E-dependent translation of viral genomic RNAs. Binds to the cap-binding site of host EIF4E and thus interferes with the host EIF4E-dependent mRNA export and translation. VPg-RNA directly binds EIF4E and is a template for transcription. Also forms trimeric complexes with EIF4E-EIF4G, which are templates for translation. Functionally, has RNA-binding and proteolytic activities. In terms of biological role, an RNA-dependent RNA polymerase that plays an essential role in the virus replication. Its function is as follows. Involved in aphid transmission, cell-to-cell and systemis movement, encapsidation of the viral RNA and in the regulation of viral RNA amplification. The protein is Genome polyprotein of Prunus armeniaca (Apricot).